The following is a 141-amino-acid chain: Lutropin subunit beta (141 aa).

The signal sequence occupies residues 1 to 20 (MERLQGLLLWLLLSPSVVWA). 6 disulfides stabilise this stretch: cysteine 29-cysteine 77, cysteine 43-cysteine 92, cysteine 46-cysteine 130, cysteine 54-cysteine 108, cysteine 58-cysteine 110, and cysteine 113-cysteine 120. N-linked (GlcNAc...) asparagine glycosylation is present at asparagine 33.

This sequence belongs to the glycoprotein hormones subunit beta family. As to quaternary structure, heterodimer of a common alpha chain and a unique beta chain which confers biological specificity to thyrotropin, lutropin, follitropin and gonadotropin.

The protein resides in the secreted. Its function is as follows. Promotes spermatogenesis and ovulation by stimulating the testes and ovaries to synthesize steroids. The protein is Lutropin subunit beta (Lhb) of Rattus norvegicus (Rat).